Reading from the N-terminus, the 130-residue chain is Small ribosomal subunit protein uS11 (130 aa).

The protein belongs to the universal ribosomal protein uS11 family. In terms of assembly, part of the 30S ribosomal subunit. Interacts with proteins S7 and S18. Binds to IF-3.

Its function is as follows. Located on the platform of the 30S subunit, it bridges several disparate RNA helices of the 16S rRNA. Forms part of the Shine-Dalgarno cleft in the 70S ribosome. The polypeptide is Small ribosomal subunit protein uS11 (Helicobacter hepaticus (strain ATCC 51449 / 3B1)).